A 293-amino-acid polypeptide reads, in one-letter code: tRNA (guanine-N(7)-)-methyltransferase (293 aa).

Residues Gly-105, 128–129 (EI), 163–164 (NT), and Cys-183 contribute to the S-adenosyl-L-methionine site. Residue Asp-186 is part of the active site. Position 261–263 (261–263 (TEE)) interacts with S-adenosyl-L-methionine.

It belongs to the class I-like SAM-binding methyltransferase superfamily. TrmB family. In terms of assembly, forms a complex with trm82.

Its subcellular location is the nucleus. The enzyme catalyses guanosine(46) in tRNA + S-adenosyl-L-methionine = N(7)-methylguanosine(46) in tRNA + S-adenosyl-L-homocysteine. It functions in the pathway tRNA modification; N(7)-methylguanine-tRNA biosynthesis. Its function is as follows. Catalyzes the formation of N(7)-methylguanine at position 46 (m7G46) in tRNA. This chain is tRNA (guanine-N(7)-)-methyltransferase (trm8), found in Neurospora crassa (strain ATCC 24698 / 74-OR23-1A / CBS 708.71 / DSM 1257 / FGSC 987).